The following is a 786-amino-acid chain: Leucine-rich repeat extensin-like protein 2 (786 aa).

Positions methionine 1–glycine 28 are cleaved as a signal peptide. Asparagine 73 and asparagine 79 each carry an N-linked (GlcNAc...) asparagine glycan. LRR repeat units lie at residues threonine 100–leucine 124, threonine 125–histidine 147, lysine 149–leucine 172, proline 173–lysine 196, leucine 198–serine 219, valine 221–glycine 243, lysine 244–leucine 267, lysine 268–methionine 291, and lysine 292–leucine 315. N-linked (GlcNAc...) asparagine glycans are attached at residues asparagine 255 and asparagine 269. 2 N-linked (GlcNAc...) asparagine glycosylation sites follow: asparagine 320 and asparagine 346. 4 disordered regions span residues isoleucine 352 to valine 372, phenylalanine 390 to valine 589, proline 624 to proline 645, and proline 694 to tyrosine 786. Basic and acidic residues predominate over residues aspartate 353–lysine 362. Positions serine 384–tyrosine 786 are contains the Ser-Pro(4) repeats. Composition is skewed to pro residues over residues tyrosine 460–serine 477, tyrosine 487–lysine 542, and serine 566–valine 589. 4 stretches are compositionally biased toward pro residues: residues proline 694–threonine 713, proline 720–lysine 737, proline 752–proline 769, and serine 777–tyrosine 786.

Post-translationally, hydroxylated on proline residues in the S-P-P-P-P repeat. In terms of processing, O-glycosylated on hydroxyprolines. Mostly expressed in roots, also present in stems at low levels. In roots, confined to differentiation zones, the collet, and meristematic cells of tips.

It is found in the secreted. Its subcellular location is the cell wall. Modulates cell morphogenesis by regulating cell wall formation and assembly, and/or growth polarization. Together with LRX2, component of the extracellular mechanism regulating root hair morphogenesis and elongation. This Arabidopsis thaliana (Mouse-ear cress) protein is Leucine-rich repeat extensin-like protein 2 (LRX2).